The chain runs to 168 residues: Siroheme decarboxylase NirH subunit (168 aa).

Belongs to the Ahb/Nir family. Probably forms a complex composed of NirD, NirL, NirG and NirH. All proteins are required for the total conversion of siroheme to didecarboxysiroheme.

The enzyme catalyses siroheme + 2 H(+) = 12,18-didecarboxysiroheme + 2 CO2. It participates in porphyrin-containing compound metabolism. Its function is as follows. Involved in heme d1 biosynthesis. Catalyzes the decarboxylation of siroheme into didecarboxysiroheme. The polypeptide is Siroheme decarboxylase NirH subunit (Stutzerimonas stutzeri (Pseudomonas stutzeri)).